We begin with the raw amino-acid sequence, 189 residues long: HGPRTase-like protein (189 aa).

Belongs to the purine/pyrimidine phosphoribosyltransferase family. Archaeal HPRT subfamily.

In terms of biological role, may catalyze a purine salvage reaction, the substrate is unknown. In Halorhabdus utahensis (strain DSM 12940 / JCM 11049 / AX-2), this protein is HGPRTase-like protein.